Reading from the N-terminus, the 270-residue chain is MHLQPSTAVVTGAASGIGFALSARLAQAGARVVMTDIAGDGLAGAVEELAAHGADVTAVVADLTDPAAVQELADTAFGRLGDIDVVCNNAGVVGPVGMPLWSVPLDEMHAVFDVNYWAHVHVARAFVPRLLDSGRPSHLVQTASMSAFVVGAGTASYAASKHADLAAARSLRADLDGTPVRVSVLCPGRVDTPMTRGLVAPRNATGNTTISADEAADAVWNALGSDRFYIFTNADAQTRLGDQFNDVWRHLAREKYWTESSSPSVNSSRP.

12–36 (GAASGIGFALSARLAQAGARVVMTD) provides a ligand contact to NAD(+). Ser144 provides a ligand contact to substrate. Tyr157 functions as the Proton acceptor in the catalytic mechanism. Lys161 contacts NAD(+).

This sequence belongs to the short-chain dehydrogenases/reductases (SDR) family.

It carries out the reaction 1-deoxy-11beta-hydroxypentalenate + NAD(+) = 1-deoxy-11-oxopentalenate + NADH + H(+). The protein operates within antibiotic biosynthesis; neopentalenolactone biosynthesis. Catalyzes the oxidation of 1-deoxy-11-beta-hydroxypentalenic acid to 1-deoxy-11-oxopentalenic acid in the biosynthesis of neopentalenolactone antibiotic. The protein is 1-deoxy-11-beta-hydroxypentalenate dehydrogenase (ptlF) of Streptomyces avermitilis (strain ATCC 31267 / DSM 46492 / JCM 5070 / NBRC 14893 / NCIMB 12804 / NRRL 8165 / MA-4680).